The chain runs to 353 residues: GDSL esterase/lipase At5g03810 (353 aa).

The N-terminal stretch at 1-24 (MKMFITMSMCLSVIACFYAGVGTG) is a signal peptide. Residue serine 37 is the Nucleophile of the active site. N-linked (GlcNAc...) asparagine glycans are attached at residues asparagine 100, asparagine 255, asparagine 256, asparagine 260, and asparagine 320. Catalysis depends on residues aspartate 328 and histidine 331.

This sequence belongs to the 'GDSL' lipolytic enzyme family.

The protein resides in the secreted. This is GDSL esterase/lipase At5g03810 from Arabidopsis thaliana (Mouse-ear cress).